Consider the following 205-residue polypeptide: Ras-related protein Rab-1A (205 aa).

Residues 18–26 (GDSGVGKSC), 36–43 (YTESYIST), 66–70 (DTAGQ), 124–127 (NKSD), and 154–156 (SAK) each bind GTP. The Effector region signature appears at 40–48 (YISTIGVDF). Residues 183-198 (SDSKPSVKINSSTPVS) show a composition bias toward polar residues. Residues 183–205 (SDSKPSVKINSSTPVSANKGGCC) are disordered. 2 S-geranylgeranyl cysteine lipidation sites follow: Cys204 and Cys205.

Belongs to the small GTPase superfamily. Rab family.

The protein resides in the golgi apparatus. Its subcellular location is the endoplasmic reticulum. Functionally, probably required for transit of protein from the ER through Golgi compartment. This Lymnaea stagnalis (Great pond snail) protein is Ras-related protein Rab-1A (RAB1A).